Reading from the N-terminus, the 677-residue chain is DNA ligase (677 aa).

NAD(+) contacts are provided by residues 43 to 47 (DHVYD), 92 to 93 (SM), and Glu122. Residue Lys124 is the N6-AMP-lysine intermediate of the active site. Arg145, Glu179, Lys295, and Lys319 together coordinate NAD(+). The Zn(2+) site is built by Cys413, Cys416, Cys431, and Cys436. A BRCT domain is found at 599-677 (TSDSYFNGKT…EADLDNYLAQ (79 aa)).

This sequence belongs to the NAD-dependent DNA ligase family. LigA subfamily. Mg(2+) serves as cofactor. Requires Mn(2+) as cofactor.

The catalysed reaction is NAD(+) + (deoxyribonucleotide)n-3'-hydroxyl + 5'-phospho-(deoxyribonucleotide)m = (deoxyribonucleotide)n+m + AMP + beta-nicotinamide D-nucleotide.. In terms of biological role, DNA ligase that catalyzes the formation of phosphodiester linkages between 5'-phosphoryl and 3'-hydroxyl groups in double-stranded DNA using NAD as a coenzyme and as the energy source for the reaction. It is essential for DNA replication and repair of damaged DNA. This is DNA ligase from Latilactobacillus sakei subsp. sakei (strain 23K) (Lactobacillus sakei subsp. sakei).